Consider the following 206-residue polypeptide: BAG family molecular chaperone regulator 1B (206 aa).

The BAG domain occupies 122-202; sequence IEAYIDELQQ…QYLSKLDSTK (81 aa). Phosphoserine is present on Ser-144.

Binds to the ATPase domain of HSP70/HSC chaperones.

In terms of biological role, inhibits the chaperone activity of HSP70/HSC70 by promoting substrate release. This is BAG family molecular chaperone regulator 1B (bag102) from Schizosaccharomyces pombe (strain 972 / ATCC 24843) (Fission yeast).